We begin with the raw amino-acid sequence, 496 residues long: Glycogen synthase (496 aa).

Lysine 15 provides a ligand contact to ADP-alpha-D-glucose.

The protein belongs to the glycosyltransferase 1 family. Bacterial/plant glycogen synthase subfamily.

It carries out the reaction [(1-&gt;4)-alpha-D-glucosyl](n) + ADP-alpha-D-glucose = [(1-&gt;4)-alpha-D-glucosyl](n+1) + ADP + H(+). It participates in glycan biosynthesis; glycogen biosynthesis. Its function is as follows. Synthesizes alpha-1,4-glucan chains using ADP-glucose. The polypeptide is Glycogen synthase (Natranaerobius thermophilus (strain ATCC BAA-1301 / DSM 18059 / JW/NM-WN-LF)).